A 249-amino-acid chain; its full sequence is Large ribosomal subunit protein uL1 (249 aa).

Belongs to the universal ribosomal protein uL1 family. In terms of assembly, part of the 50S ribosomal subunit.

Functionally, binds directly to 23S rRNA. The L1 stalk is quite mobile in the ribosome, and is involved in E site tRNA release. Its function is as follows. Protein L1 is also a translational repressor protein, it controls the translation of the L11 operon by binding to its mRNA. This Orientia tsutsugamushi (strain Ikeda) (Rickettsia tsutsugamushi) protein is Large ribosomal subunit protein uL1.